A 161-amino-acid chain; its full sequence is Putative pre-16S rRNA nuclease (161 aa).

Residues alanine 142 to alanine 161 form a disordered region.

This sequence belongs to the YqgF nuclease family.

It is found in the cytoplasm. Functionally, could be a nuclease involved in processing of the 5'-end of pre-16S rRNA. The sequence is that of Putative pre-16S rRNA nuclease from Clavibacter sepedonicus (Clavibacter michiganensis subsp. sepedonicus).